The chain runs to 138 residues: MSTDSIVKASNWRLVEVGRVVLIKKGQSAGKLAAIVEIIDQKKVLIDGPKAGVPRQAINLGQVVLTPLTFALPRGARTATVSKKWAAAAVCEKWAASSWAKKIAQRERRAALTDFERFQVMVLRKQKRYTVKKALAKA.

Ser2 is modified (N-acetylserine).

It belongs to the eukaryotic ribosomal protein eL14 family. Component of the large ribosomal subunit (LSU). Mature yeast ribosomes consist of a small (40S) and a large (60S) subunit. The 40S small subunit contains 1 molecule of ribosomal RNA (18S rRNA) and 33 different proteins (encoded by 57 genes). The large 60S subunit contains 3 rRNA molecules (25S, 5.8S and 5S rRNA) and 46 different proteins (encoded by 81 genes). In terms of processing, N-terminally acetylated by acetyltransferase NatA.

It localises to the cytoplasm. Its function is as follows. Component of the ribosome, a large ribonucleoprotein complex responsible for the synthesis of proteins in the cell. The small ribosomal subunit (SSU) binds messenger RNAs (mRNAs) and translates the encoded message by selecting cognate aminoacyl-transfer RNA (tRNA) molecules. The large subunit (LSU) contains the ribosomal catalytic site termed the peptidyl transferase center (PTC), which catalyzes the formation of peptide bonds, thereby polymerizing the amino acids delivered by tRNAs into a polypeptide chain. The nascent polypeptides leave the ribosome through a tunnel in the LSU and interact with protein factors that function in enzymatic processing, targeting, and the membrane insertion of nascent chains at the exit of the ribosomal tunnel. The polypeptide is Large ribosomal subunit protein eL14A (Saccharomyces cerevisiae (strain ATCC 204508 / S288c) (Baker's yeast)).